Consider the following 187-residue polypeptide: Shikimate kinase (187 aa).

Residue 14–19 participates in ATP binding; that stretch reads TSGKST. Ser-18 contacts Mg(2+). Substrate is bound by residues Asp-36, Arg-60, and Gly-82. Arg-120 lines the ATP pocket. Residue Arg-147 coordinates substrate.

It belongs to the shikimate kinase family. In terms of assembly, monomer. Mg(2+) is required as a cofactor.

The protein localises to the cytoplasm. It catalyses the reaction shikimate + ATP = 3-phosphoshikimate + ADP + H(+). It functions in the pathway metabolic intermediate biosynthesis; chorismate biosynthesis; chorismate from D-erythrose 4-phosphate and phosphoenolpyruvate: step 5/7. In terms of biological role, catalyzes the specific phosphorylation of the 3-hydroxyl group of shikimic acid using ATP as a cosubstrate. This chain is Shikimate kinase, found in Chloroherpeton thalassium (strain ATCC 35110 / GB-78).